The sequence spans 300 residues: Glutamyl-Q tRNA(Asp) synthetase (300 aa).

L-glutamate-binding positions include 8–12 and Asp44; that span reads RFAPT. A 'HIGH' region motif is present at residues 11-21; it reads PTPSGDLHLGS. Zn(2+) is bound by residues Cys100, Cys102, Tyr122, and Cys126. Residues Tyr181 and Arg199 each contribute to the L-glutamate site. Residues 237-241 carry the 'KMSKS' region motif; the sequence is KLSKQ. Residue Lys240 participates in ATP binding.

The protein belongs to the class-I aminoacyl-tRNA synthetase family. GluQ subfamily. The cofactor is Zn(2+).

Its function is as follows. Catalyzes the tRNA-independent activation of glutamate in presence of ATP and the subsequent transfer of glutamate onto a tRNA(Asp). Glutamate is transferred on the 2-amino-5-(4,5-dihydroxy-2-cyclopenten-1-yl) moiety of the queuosine in the wobble position of the QUC anticodon. In Synechococcus sp. (strain ATCC 27144 / PCC 6301 / SAUG 1402/1) (Anacystis nidulans), this protein is Glutamyl-Q tRNA(Asp) synthetase.